The sequence spans 113 residues: Endoribonuclease SymE (113 aa).

A SpoVT-AbrB domain is found at 29–74; that stretch reads SRYPDYSRIPAITLKGQWLEAAGFATGTAIDVKVMEGCIVLTAQPP.

The protein belongs to the SymE family.

The protein resides in the cytoplasm. Functionally, involved in the degradation and recycling of damaged RNA. It is itself a target for degradation by the ATP-dependent protease Lon. The protein is Endoribonuclease SymE of Escherichia coli O1:K1 / APEC.